A 438-amino-acid polypeptide reads, in one-letter code: UDP-N-acetylmuramoylalanine--D-glutamate ligase (438 aa).

112 to 118 is an ATP binding site; it reads GSNGKST.

It belongs to the MurCDEF family.

It is found in the cytoplasm. It carries out the reaction UDP-N-acetyl-alpha-D-muramoyl-L-alanine + D-glutamate + ATP = UDP-N-acetyl-alpha-D-muramoyl-L-alanyl-D-glutamate + ADP + phosphate + H(+). It functions in the pathway cell wall biogenesis; peptidoglycan biosynthesis. Cell wall formation. Catalyzes the addition of glutamate to the nucleotide precursor UDP-N-acetylmuramoyl-L-alanine (UMA). This is UDP-N-acetylmuramoylalanine--D-glutamate ligase from Yersinia pseudotuberculosis serotype I (strain IP32953).